A 319-amino-acid chain; its full sequence is Tyrosine--tRNA ligase (319 aa).

Residue Tyr-35 participates in L-tyrosine binding. Residues 40–48 carry the 'HIGH' region motif; sequence PSGKIHLGH. Tyr-156, Gln-160, Asp-163, and Gln-178 together coordinate L-tyrosine. The 'KMSKS' region signature appears at 213 to 217; that stretch reads KMSSS. Residue Ser-216 participates in ATP binding.

The protein belongs to the class-I aminoacyl-tRNA synthetase family. TyrS type 3 subfamily. As to quaternary structure, homodimer.

Its subcellular location is the cytoplasm. The catalysed reaction is tRNA(Tyr) + L-tyrosine + ATP = L-tyrosyl-tRNA(Tyr) + AMP + diphosphate + H(+). Catalyzes the attachment of tyrosine to tRNA(Tyr) in a two-step reaction: tyrosine is first activated by ATP to form Tyr-AMP and then transferred to the acceptor end of tRNA(Tyr). This is Tyrosine--tRNA ligase from Methanobrevibacter smithii (strain ATCC 35061 / DSM 861 / OCM 144 / PS).